A 164-amino-acid polypeptide reads, in one-letter code: UPF0305 protein MTH_812 (164 aa).

The protein belongs to the UPF0305 family.

The polypeptide is UPF0305 protein MTH_812 (Methanothermobacter thermautotrophicus (strain ATCC 29096 / DSM 1053 / JCM 10044 / NBRC 100330 / Delta H) (Methanobacterium thermoautotrophicum)).